We begin with the raw amino-acid sequence, 298 residues long: Protoheme IX farnesyltransferase (298 aa).

The next 9 helical transmembrane spans lie at 29 to 49 (LIVFTAMIGMCLATPDFPPLL), 51 to 71 (FGVASLGIALVSFAAAALNCL), 97 to 117 (ETVTLATALGAAGLWLLHGFI), 120 to 140 (LTMWLTLATFVGYTVIYTLIL), 148 to 168 (IVIGGASGAMPPLLGWTAMTG), 175 to 195 (LVLFLIIFLWTPPHFWALACY), 221 to 241 (ILWYTLMLAAASLIPVSLGMS), 243 to 263 (GFYLIAIGLLDLVFLGYAIAL), and 278 to 298 (YSILYLTLLFAALFADRLIVL).

It belongs to the UbiA prenyltransferase family. Protoheme IX farnesyltransferase subfamily.

It localises to the cell inner membrane. It catalyses the reaction heme b + (2E,6E)-farnesyl diphosphate + H2O = Fe(II)-heme o + diphosphate. It functions in the pathway porphyrin-containing compound metabolism; heme O biosynthesis; heme O from protoheme: step 1/1. Functionally, converts heme B (protoheme IX) to heme O by substitution of the vinyl group on carbon 2 of heme B porphyrin ring with a hydroxyethyl farnesyl side group. The sequence is that of Protoheme IX farnesyltransferase from Dechloromonas aromatica (strain RCB).